A 178-amino-acid chain; its full sequence is N-alpha-acetyltransferase 20 (178 aa).

An N-acetyltransferase domain is found at 2-157 (TTLRAFTCDD…DAYDMRKALS (156 aa)). Positions 159–178 (DTEKKSIVPLPHPVRPEDIE) are disordered.

The protein belongs to the acetyltransferase family. ARD1 subfamily. In terms of assembly, component of the N-terminal acetyltransferase B (NatB) complex which is composed of naa20 and naa25.

The protein localises to the cytoplasm. The protein resides in the nucleus. It carries out the reaction N-terminal L-methionyl-L-asparaginyl-[protein] + acetyl-CoA = N-terminal N(alpha)-acetyl-L-methionyl-L-asparaginyl-[protein] + CoA + H(+). The enzyme catalyses N-terminal L-methionyl-L-glutaminyl-[protein] + acetyl-CoA = N-terminal N(alpha)-acetyl-L-methionyl-L-glutaminyl-[protein] + CoA + H(+). It catalyses the reaction N-terminal L-methionyl-L-aspartyl-[protein] + acetyl-CoA = N-terminal N(alpha)-acetyl-L-methionyl-L-aspartyl-[protein] + CoA + H(+). The catalysed reaction is N-terminal L-methionyl-L-glutamyl-[protein] + acetyl-CoA = N-terminal N(alpha)-acetyl-L-methionyl-L-glutamyl-[protein] + CoA + H(+). Catalytic subunit of the NatB complex which catalyzes acetylation of the N-terminal methionine residues of peptides beginning with Met-Asp, Met-Glu, Met-Asn and Met-Gln. Proteins with cell cycle functions are overrepresented in the pool of NatB substrates. Required for maintaining the structure and function of actomyosin fibers and for proper cellular migration. The chain is N-alpha-acetyltransferase 20 (naa20) from Xenopus laevis (African clawed frog).